The following is a 319-amino-acid chain: Serine acetyltransferase, plasmid (319 aa).

It belongs to the transferase hexapeptide repeat family.

The protein resides in the cytoplasm. The catalysed reaction is L-serine + acetyl-CoA = O-acetyl-L-serine + CoA. The protein operates within amino-acid biosynthesis; L-cysteine biosynthesis; L-cysteine from L-serine: step 1/2. This is Serine acetyltransferase, plasmid (srpH) from Synechococcus elongatus (strain ATCC 33912 / PCC 7942 / FACHB-805) (Anacystis nidulans R2).